Here is a 184-residue protein sequence, read N- to C-terminus: Peptide deformylase (184 aa).

Residues cysteine 111 and histidine 154 each contribute to the Fe cation site. Glutamate 155 is an active-site residue. Histidine 158 lines the Fe cation pocket.

Belongs to the polypeptide deformylase family. The cofactor is Fe(2+).

The catalysed reaction is N-terminal N-formyl-L-methionyl-[peptide] + H2O = N-terminal L-methionyl-[peptide] + formate. Its function is as follows. Removes the formyl group from the N-terminal Met of newly synthesized proteins. Requires at least a dipeptide for an efficient rate of reaction. N-terminal L-methionine is a prerequisite for activity but the enzyme has broad specificity at other positions. The polypeptide is Peptide deformylase (Lactobacillus delbrueckii subsp. bulgaricus (strain ATCC 11842 / DSM 20081 / BCRC 10696 / JCM 1002 / NBRC 13953 / NCIMB 11778 / NCTC 12712 / WDCM 00102 / Lb 14)).